The chain runs to 700 residues: Methionine synthase reductase (700 aa).

Residues 4–147 enclose the Flavodoxin-like domain; sequence FLLLYATQRG…VVEPWIDGLW (144 aa). FMN-binding positions include 10 to 14 and 93 to 124; these read TQRGQ and LLGL…QHFY. The hinge stretch occupies residues 168-247; sequence TLAQASDAPL…SSLSIPAVSP (80 aa). Ser173 and Ser190 each carry phosphoserine. The region spanning 272–534 is the FAD-binding FR-type domain; the sequence is DPIFQVPISK…PRATNSFHLP (263 aa). Lys292 is an NADP(+) binding site. FAD contacts are provided by residues 452 to 455 and 488 to 491; these read RPYS and GVCT. NADP(+) contacts are provided by residues 611–612, 626–628, and Asp661; these read SR and YVQ. Trp699 is an FAD binding site.

In terms of assembly, forms a multiprotein complex with MMACHC, MMADHC and MTR. FAD serves as cofactor. Requires FMN as cofactor.

It is found in the cytoplasm. It carries out the reaction 2 methylcob(III)alamin-[methionine synthase] + 2 S-adenosyl-L-homocysteine + NADP(+) + H(+) = 2 cob(II)alamin-[methionine synthase] + 2 S-adenosyl-L-methionine + NADPH. The catalysed reaction is 2 cob(II)alamin + A + 2 H2O + 2 H(+) = 2 aquacob(III)alamin + AH2. Its function is as follows. Key enzyme in methionine and folate homeostasis responsible for the reactivation of methionine synthase (MTR/MS) activity by catalyzing the reductive methylation of MTR-bound cob(II)alamin. Cobalamin (vitamin B12) forms a complex with MTR to serve as an intermediary in methyl transfer reactions that cycles between MTR-bound methylcob(III)alamin and MTR bound-cob(I)alamin forms, and occasional oxidative escape of the cob(I)alamin intermediate during the catalytic cycle leads to the inactive cob(II)alamin species. The processing of cobalamin in the cytosol occurs in a multiprotein complex composed of at least MMACHC, MMADHC, MTRR and MTR which may contribute to shuttle safely and efficiently cobalamin towards MTR in order to produce methionine. Also necessary for the utilization of methyl groups from the folate cycle, thereby affecting transgenerational epigenetic inheritance. Also acts as a molecular chaperone for methionine synthase by stabilizing apoMTR and incorporating methylcob(III)alamin into apoMTR to form the holoenzyme. Also serves as an aquacob(III)alamin reductase by reducing aquacob(III)alamin to cob(II)alamin; this reduction leads to stimulation of the conversion of apoMTR and aquacob(III)alamin to MTR holoenzyme. The chain is Methionine synthase reductase (Mtrr) from Rattus norvegicus (Rat).